The sequence spans 64 residues: Prokaryotic ubiquitin-like protein Pup (64 aa).

The span at 1 to 10 (MNQNGSQIHS) shows a compositional bias: polar residues. The interval 1–32 (MNQNGSQIHSDGNGHSDDTDTPGVSAGQVSVN) is disordered. The tract at residues 20-58 (DTPGVSAGQVSVNTAGVDDLLDEIDGLLESNAEEFVRSY) is ARC ATPase binding. Residue Q64 is modified to Deamidated glutamine. Q64 participates in a covalent cross-link: Isoglutamyl lysine isopeptide (Gln-Lys) (interchain with K-? in acceptor proteins).

The protein belongs to the prokaryotic ubiquitin-like protein family. Strongly interacts with the proteasome-associated ATPase ARC through a hydrophobic interface; the interacting region of Pup lies in its C-terminal half. There is one Pup binding site per ARC hexamer ring. Is modified by deamidation of its C-terminal glutamine to glutamate by the deamidase Dop, a prerequisite to the subsequent pupylation process.

Its pathway is protein degradation; proteasomal Pup-dependent pathway. Its function is as follows. Protein modifier that is covalently attached to lysine residues of substrate proteins, thereby targeting them for proteasomal degradation. The tagging system is termed pupylation. The protein is Prokaryotic ubiquitin-like protein Pup of Corynebacterium diphtheriae (strain ATCC 700971 / NCTC 13129 / Biotype gravis).